A 236-amino-acid polypeptide reads, in one-letter code: tRNA1(Val) (adenine(37)-N6)-methyltransferase (236 aa).

It belongs to the methyltransferase superfamily. tRNA (adenine-N(6)-)-methyltransferase family.

It localises to the cytoplasm. The catalysed reaction is adenosine(37) in tRNA1(Val) + S-adenosyl-L-methionine = N(6)-methyladenosine(37) in tRNA1(Val) + S-adenosyl-L-homocysteine + H(+). Functionally, specifically methylates the adenine in position 37 of tRNA(1)(Val) (anticodon cmo5UAC). The polypeptide is tRNA1(Val) (adenine(37)-N6)-methyltransferase (Actinobacillus pleuropneumoniae serotype 5b (strain L20)).